The chain runs to 359 residues: Probable dual-specificity RNA methyltransferase RlmN (359 aa).

Residue E99 is the Proton acceptor of the active site. One can recognise a Radical SAM core domain in the interval 105–342 (TENRRTACVS…VTIRKSYGTT (238 aa)). Cysteines 112 and 347 form a disulfide. [4Fe-4S] cluster contacts are provided by C119, C123, and C126. Residues 171 to 172 (GE), S204, 227 to 229 (SLH), and N304 each bind S-adenosyl-L-methionine. Residue C347 is the S-methylcysteine intermediate of the active site.

It belongs to the radical SAM superfamily. RlmN family. Requires [4Fe-4S] cluster as cofactor.

The protein localises to the cytoplasm. The enzyme catalyses adenosine(2503) in 23S rRNA + 2 reduced [2Fe-2S]-[ferredoxin] + 2 S-adenosyl-L-methionine = 2-methyladenosine(2503) in 23S rRNA + 5'-deoxyadenosine + L-methionine + 2 oxidized [2Fe-2S]-[ferredoxin] + S-adenosyl-L-homocysteine. It carries out the reaction adenosine(37) in tRNA + 2 reduced [2Fe-2S]-[ferredoxin] + 2 S-adenosyl-L-methionine = 2-methyladenosine(37) in tRNA + 5'-deoxyadenosine + L-methionine + 2 oxidized [2Fe-2S]-[ferredoxin] + S-adenosyl-L-homocysteine. Specifically methylates position 2 of adenine 2503 in 23S rRNA and position 2 of adenine 37 in tRNAs. The chain is Probable dual-specificity RNA methyltransferase RlmN from Pelodictyon phaeoclathratiforme (strain DSM 5477 / BU-1).